A 580-amino-acid polypeptide reads, in one-letter code: 2-succinyl-5-enolpyruvyl-6-hydroxy-3-cyclohexene-1-carboxylate synthase (580 aa).

It belongs to the TPP enzyme family. MenD subfamily. Homodimer. It depends on Mg(2+) as a cofactor. The cofactor is Mn(2+). Thiamine diphosphate is required as a cofactor.

It carries out the reaction isochorismate + 2-oxoglutarate + H(+) = 5-enolpyruvoyl-6-hydroxy-2-succinyl-cyclohex-3-ene-1-carboxylate + CO2. It participates in quinol/quinone metabolism; 1,4-dihydroxy-2-naphthoate biosynthesis; 1,4-dihydroxy-2-naphthoate from chorismate: step 2/7. It functions in the pathway quinol/quinone metabolism; menaquinone biosynthesis. Functionally, catalyzes the thiamine diphosphate-dependent decarboxylation of 2-oxoglutarate and the subsequent addition of the resulting succinic semialdehyde-thiamine pyrophosphate anion to isochorismate to yield 2-succinyl-5-enolpyruvyl-6-hydroxy-3-cyclohexene-1-carboxylate (SEPHCHC). The protein is 2-succinyl-5-enolpyruvyl-6-hydroxy-3-cyclohexene-1-carboxylate synthase of Listeria monocytogenes serovar 1/2a (strain ATCC BAA-679 / EGD-e).